A 619-amino-acid chain; its full sequence is Replication restart protein PriA (619 aa).

The region spanning 119 to 285 (LKELQKHSAS…KDKALVRLKG (167 aa)) is the Helicase ATP-binding domain. 132–139 (GDTGSGKT) contacts ATP. The short motif at 228-231 (DEEH) is the DEAH box element. Zn(2+) contacts are provided by Cys336, Cys339, Cys345, Cys348, Cys363, Cys366, Cys376, and Cys379. The Helicase C-terminal domain maps to 371–532 (PIPKICSACQ…ELYPPFSRLC (162 aa)).

Belongs to the helicase family. PriA subfamily. As to quaternary structure, component of the replication restart primosome. Zn(2+) is required as a cofactor.

The enzyme catalyses Couples ATP hydrolysis with the unwinding of duplex DNA by translocating in the 3'-5' direction.. It carries out the reaction ATP + H2O = ADP + phosphate + H(+). Functionally, initiates the restart of stalled replication forks, which reloads the replicative helicase on sites other than the origin of replication. Recognizes and binds to abandoned replication forks and remodels them to uncover a helicase loading site. Promotes assembly of the primosome at these replication forks. Its function is as follows. Important for survival of the bacteria in host cells. The chain is Replication restart protein PriA from Helicobacter pylori (strain ATCC 700392 / 26695) (Campylobacter pylori).